The following is a 100-amino-acid chain: Ubiquitin-related modifier 1 (100 aa).

G100 is modified (1-thioglycine). G100 participates in a covalent cross-link: Glycyl lysine isopeptide (Gly-Lys) (interchain with K-? in acceptor proteins).

It belongs to the URM1 family. C-terminal thiocarboxylation occurs in 2 steps, it is first acyl-adenylated (-COAMP) via the hesA/moeB/thiF part of UBA4, then thiocarboxylated (-COSH) via the rhodanese domain of UBA4.

It localises to the cytoplasm. It functions in the pathway tRNA modification; 5-methoxycarbonylmethyl-2-thiouridine-tRNA biosynthesis. Acts as a sulfur carrier required for 2-thiolation of mcm(5)S(2)U at tRNA wobble positions of cytosolic tRNA(Lys), tRNA(Glu) and tRNA(Gln). Serves as sulfur donor in tRNA 2-thiolation reaction by being thiocarboxylated (-COSH) at its C-terminus by the MOCS3 homolog UBA4. The sulfur is then transferred to tRNA to form 2-thiolation of mcm(5)S(2)U. Prior mcm(5) tRNA modification by the elongator complex is required for 2-thiolation. Also acts as a ubiquitin-like protein (UBL) that is covalently conjugated via an isopeptide bond to lysine residues of target proteins such as AHP1. The thiocarboxylated form serves as substrate for conjugation and oxidative stress specifically induces the formation of UBL-protein conjugates. This Eremothecium gossypii (strain ATCC 10895 / CBS 109.51 / FGSC 9923 / NRRL Y-1056) (Yeast) protein is Ubiquitin-related modifier 1.